The primary structure comprises 612 residues: Dihydroxy-acid dehydratase (612 aa).

Asp81 is a binding site for Mg(2+). [2Fe-2S] cluster is bound at residue Cys122. Mg(2+) contacts are provided by Asp123 and Lys124. Residue Lys124 is modified to N6-carboxylysine. [2Fe-2S] cluster is bound at residue Cys195. Mg(2+) is bound at residue Glu491. Ser517 functions as the Proton acceptor in the catalytic mechanism.

The protein belongs to the IlvD/Edd family. In terms of assembly, homodimer. It depends on [2Fe-2S] cluster as a cofactor. Mg(2+) serves as cofactor.

The catalysed reaction is (2R)-2,3-dihydroxy-3-methylbutanoate = 3-methyl-2-oxobutanoate + H2O. The enzyme catalyses (2R,3R)-2,3-dihydroxy-3-methylpentanoate = (S)-3-methyl-2-oxopentanoate + H2O. It functions in the pathway amino-acid biosynthesis; L-isoleucine biosynthesis; L-isoleucine from 2-oxobutanoate: step 3/4. Its pathway is amino-acid biosynthesis; L-valine biosynthesis; L-valine from pyruvate: step 3/4. Its function is as follows. Functions in the biosynthesis of branched-chain amino acids. Catalyzes the dehydration of (2R,3R)-2,3-dihydroxy-3-methylpentanoate (2,3-dihydroxy-3-methylvalerate) into 2-oxo-3-methylpentanoate (2-oxo-3-methylvalerate) and of (2R)-2,3-dihydroxy-3-methylbutanoate (2,3-dihydroxyisovalerate) into 2-oxo-3-methylbutanoate (2-oxoisovalerate), the penultimate precursor to L-isoleucine and L-valine, respectively. In Sinorhizobium medicae (strain WSM419) (Ensifer medicae), this protein is Dihydroxy-acid dehydratase.